The following is a 190-amino-acid chain: Small ribosomal subunit protein mS23 (190 aa).

Alanine 2 is modified (N-acetylalanine). Lysine 102 is subject to N6-acetyllysine. Residues 139-190 (RTQHGGSHVSRKSEHLSVRPQTALEENETQKEVPQDQHLEAPADQSKGLLPP) are disordered. Residues 166–179 (ETQKEVPQDQHLEA) show a composition bias toward basic and acidic residues.

The protein belongs to the mitochondrion-specific ribosomal protein mS23 family. As to quaternary structure, component of the mitochondrial small ribosomal subunit (mt-SSU). Mature mammalian 55S mitochondrial ribosomes consist of a small (28S) and a large (39S) subunit. The 28S small subunit contains a 12S ribosomal RNA (12S mt-rRNA) and 30 different proteins. The 39S large subunit contains a 16S rRNA (16S mt-rRNA), a copy of mitochondrial valine transfer RNA (mt-tRNA(Val)), which plays an integral structural role, and 52 different proteins.

The protein resides in the mitochondrion. This is Small ribosomal subunit protein mS23 (MRPS23) from Homo sapiens (Human).